A 555-amino-acid chain; its full sequence is Cytochrome P450 monooxygenase abl2 (555 aa).

The next 2 helical transmembrane spans lie at 38-58 (SFDL…ALFI) and 141-161 (VFIG…APLA). 2 N-linked (GlcNAc...) asparagine glycosylation sites follow: Asn-325 and Asn-360. Cys-489 provides a ligand contact to heme.

It belongs to the cytochrome P450 family. Requires heme as cofactor.

It is found in the membrane. It participates in hormone biosynthesis. In terms of biological role, cytochrome P450 monooxygenase; part of the gene cluster that mediates the biosynthesis of abscisic acid (ABA), a phytohormone that acts antagonistically toward salicylic acid (SA), jasmonic acid (JA) and ethylene (ETH) signaling, to impede plant defense responses. The first step of the pathway catalyzes the reaction from farnesyl diphosphate to alpha-ionylideneethane performed by the alpha-ionylideneethane synthase abl3 via a three-step reaction mechanism involving 2 neutral intermediates, beta-farnesene and allofarnesene. The cytochrome P450 monooxygenase abl1 might then be involved in the conversion of alpha-ionylideneethane to alpha-ionylideneacetic acid. Alpha-ionylideneacetic acid is further converted to abscisic acid in 2 steps involving the cytochrome P450 monooxygenase abl2 and the short-chain dehydrogenase/reductase abl4, via the intermediates 1'-deoxy-ABA or 1',4'-trans-diol-ABA, depending on the order of action of these 2 enzymes. Abl2 is responsible for the hydroxylation of carbon atom C-1' and abl4 might be involved in the oxidation of the C-4' carbon atom. This Leptosphaeria maculans (strain JN3 / isolate v23.1.3 / race Av1-4-5-6-7-8) (Blackleg fungus) protein is Cytochrome P450 monooxygenase abl2.